The primary structure comprises 255 residues: F-box/SPRY domain-containing protein 1 (255 aa).

In terms of domain architecture, F-box spans 3–51; sequence DRVAALCNYNVLEVVFSYLDLNDLGRCSQVCKSWFHFLNDENSDVWRFH. Residues 61 to 253 form the B30.2/SPRY domain; the sequence is TKSELLSPVP…VSMVYCGTPL (193 aa).

This sequence belongs to the FBXO45/Fsn family. Component of an E3 ubiquitin ligase complex composed of hiw and Fsn.

Its subcellular location is the synapse. It participates in protein modification; protein ubiquitination. Functionally, required in the presynaptic motoneuron to down-regulate the levels of wnd and restrain synaptic terminal growth at the neuromuscular junction (NMJ). This is F-box/SPRY domain-containing protein 1 from Drosophila persimilis (Fruit fly).